The primary structure comprises 663 residues: DNA ligase (663 aa).

NAD(+) is bound by residues 33 to 37, 82 to 83, and glutamate 112; these read DYSYD and SI. Residue lysine 114 is the N6-AMP-lysine intermediate of the active site. Residues arginine 135, glutamate 171, lysine 285, and lysine 309 each contribute to the NAD(+) site. Zn(2+) contacts are provided by cysteine 403, cysteine 406, cysteine 419, and cysteine 424. The BRCT domain occupies 581–663; it reads DKEAPLQGKV…LRILDAKSVS (83 aa).

It belongs to the NAD-dependent DNA ligase family. LigA subfamily. It depends on Mg(2+) as a cofactor. Requires Mn(2+) as cofactor.

It carries out the reaction NAD(+) + (deoxyribonucleotide)n-3'-hydroxyl + 5'-phospho-(deoxyribonucleotide)m = (deoxyribonucleotide)n+m + AMP + beta-nicotinamide D-nucleotide.. Functionally, DNA ligase that catalyzes the formation of phosphodiester linkages between 5'-phosphoryl and 3'-hydroxyl groups in double-stranded DNA using NAD as a coenzyme and as the energy source for the reaction. It is essential for DNA replication and repair of damaged DNA. This chain is DNA ligase, found in Chlamydia trachomatis serovar A (strain ATCC VR-571B / DSM 19440 / HAR-13).